Reading from the N-terminus, the 837-residue chain is Endo-1,4-beta-xylanase Z (837 aa).

A signal peptide spans methionine 1 to alanine 28. Positions threonine 299–glycine 420 constitute a CBM6 domain. The Dockerin domain maps to serine 424–glycine 492. The region spanning threonine 512 to alanine 833 is the GH10 domain. The Proton donor role is filled by glutamate 645. Glutamate 754 (nucleophile) is an active-site residue. Residues cysteine 783 and cysteine 789 are joined by a disulfide bond.

The protein belongs to the glycosyl hydrolase 10 (cellulase F) family.

It carries out the reaction Endohydrolysis of (1-&gt;4)-beta-D-xylosidic linkages in xylans.. The chain is Endo-1,4-beta-xylanase Z (xynZ) from Acetivibrio thermocellus (strain ATCC 27405 / DSM 1237 / JCM 9322 / NBRC 103400 / NCIMB 10682 / NRRL B-4536 / VPI 7372) (Clostridium thermocellum).